Here is a 302-residue protein sequence, read N- to C-terminus: Acetylglutamate kinase (302 aa).

Residues 55–56 (GG), Arg-77, and Asn-176 each bind substrate.

The protein belongs to the acetylglutamate kinase family. ArgB subfamily.

It is found in the cytoplasm. The enzyme catalyses N-acetyl-L-glutamate + ATP = N-acetyl-L-glutamyl 5-phosphate + ADP. The protein operates within amino-acid biosynthesis; L-arginine biosynthesis; N(2)-acetyl-L-ornithine from L-glutamate: step 2/4. Its function is as follows. Catalyzes the ATP-dependent phosphorylation of N-acetyl-L-glutamate. This Corynebacterium efficiens (strain DSM 44549 / YS-314 / AJ 12310 / JCM 11189 / NBRC 100395) protein is Acetylglutamate kinase.